The sequence spans 96 residues: Co-chaperonin GroES (96 aa).

The protein belongs to the GroES chaperonin family. As to quaternary structure, heptamer of 7 subunits arranged in a ring. Interacts with the chaperonin GroEL.

It localises to the cytoplasm. In terms of biological role, together with the chaperonin GroEL, plays an essential role in assisting protein folding. The GroEL-GroES system forms a nano-cage that allows encapsulation of the non-native substrate proteins and provides a physical environment optimized to promote and accelerate protein folding. GroES binds to the apical surface of the GroEL ring, thereby capping the opening of the GroEL channel. In Colwellia maris, this protein is Co-chaperonin GroES.